The chain runs to 420 residues: 3-oxo-tetronate kinase (420 aa).

Residues S258, 360–363 (GGET), and G403 contribute to the ATP site.

This sequence belongs to the four-carbon acid sugar kinase family.

It carries out the reaction 3-dehydro-L-erythronate + ATP = 3-dehydro-4-O-phospho-L-erythronate + ADP + H(+). It catalyses the reaction 3-dehydro-D-erythronate + ATP = 3-dehydro-4-O-phospho-D-erythronate + ADP + H(+). Catalyzes the ATP-dependent phosphorylation of 3-oxo-tetronate to 3-oxo-tetronate 4-phosphate. This chain is 3-oxo-tetronate kinase, found in Salmonella typhimurium (strain LT2 / SGSC1412 / ATCC 700720).